The chain runs to 367 residues: MKGGRVQVITKNNSIAKHQLGEYAVHIYVLLYYLSMREILREFEEACLLQGLVSPSTRLLISCSGGQDSVTLLFLLCQLQTNWTWRLGVVYCNHMWRYGSIETPAKLARICLLFGVSCSFSVSGSRLQKEEEGRSWRLRVLCRMSSIHSWFYISTGHTASDRIETLLSNVLRGSSSSGMRSINWYTSLDTQVGHRRISIPIIRPLLGISRLELRNYANRWKLPLCYDPSNQDQRIRRNRIRHELLPYLRHWWNPQIDRLLAQTAEVTSWESSYYDLICTQICQQYEWIGDGGVRFPWRIFHSIPTSLHSRILWIFLNRALVFLNPAHGFQGNFDILQFLLETKTCHCRHGSIYISKDVDWLRMTLVK.

ATP is bound at residue 64-69 (SGGQDS).

The protein belongs to the tRNA(Ile)-lysidine synthase family.

Its subcellular location is the plastid. The protein localises to the chloroplast. The catalysed reaction is cytidine(34) in tRNA(Ile2) + L-lysine + ATP = lysidine(34) in tRNA(Ile2) + AMP + diphosphate + H(+). Functionally, ligates lysine onto the cytidine present at position 34 of the AUA codon-specific tRNA(Ile) that contains the anticodon CAU, in an ATP-dependent manner. Cytidine is converted to lysidine, thus changing the amino acid specificity of the tRNA from methionine to isoleucine. The sequence is that of tRNA(Ile)-lysidine synthase, chloroplastic from Nephroselmis olivacea (Green alga).